The following is a 96-amino-acid chain: Aspartyl/glutamyl-tRNA(Asn/Gln) amidotransferase subunit C (96 aa).

This sequence belongs to the GatC family. As to quaternary structure, heterotrimer of A, B and C subunits.

The catalysed reaction is L-glutamyl-tRNA(Gln) + L-glutamine + ATP + H2O = L-glutaminyl-tRNA(Gln) + L-glutamate + ADP + phosphate + H(+). The enzyme catalyses L-aspartyl-tRNA(Asn) + L-glutamine + ATP + H2O = L-asparaginyl-tRNA(Asn) + L-glutamate + ADP + phosphate + 2 H(+). In terms of biological role, allows the formation of correctly charged Asn-tRNA(Asn) or Gln-tRNA(Gln) through the transamidation of misacylated Asp-tRNA(Asn) or Glu-tRNA(Gln) in organisms which lack either or both of asparaginyl-tRNA or glutaminyl-tRNA synthetases. The reaction takes place in the presence of glutamine and ATP through an activated phospho-Asp-tRNA(Asn) or phospho-Glu-tRNA(Gln). The sequence is that of Aspartyl/glutamyl-tRNA(Asn/Gln) amidotransferase subunit C from Aliarcobacter butzleri (strain RM4018) (Arcobacter butzleri).